The following is a 396-amino-acid chain: Formate-dependent phosphoribosylglycinamide formyltransferase (396 aa).

N(1)-(5-phospho-beta-D-ribosyl)glycinamide-binding positions include 25 to 26 and Glu85; that span reads EL. ATP is bound by residues Arg117, Lys158, 163–168, 198–201, and Glu206; these read SSGKGQ and EAFI. An ATP-grasp domain is found at 122–311; sequence RLAAETLAIP…EFALHVRAIL (190 aa). Mg(2+)-binding residues include Glu270 and Glu282. N(1)-(5-phospho-beta-D-ribosyl)glycinamide-binding positions include Asp289, Lys359, and 366–367; that span reads RR.

Belongs to the PurK/PurT family. In terms of assembly, homodimer.

It catalyses the reaction N(1)-(5-phospho-beta-D-ribosyl)glycinamide + formate + ATP = N(2)-formyl-N(1)-(5-phospho-beta-D-ribosyl)glycinamide + ADP + phosphate + H(+). It functions in the pathway purine metabolism; IMP biosynthesis via de novo pathway; N(2)-formyl-N(1)-(5-phospho-D-ribosyl)glycinamide from N(1)-(5-phospho-D-ribosyl)glycinamide (formate route): step 1/1. Its function is as follows. Involved in the de novo purine biosynthesis. Catalyzes the transfer of formate to 5-phospho-ribosyl-glycinamide (GAR), producing 5-phospho-ribosyl-N-formylglycinamide (FGAR). Formate is provided by PurU via hydrolysis of 10-formyl-tetrahydrofolate. The sequence is that of Formate-dependent phosphoribosylglycinamide formyltransferase from Shewanella frigidimarina (strain NCIMB 400).